Consider the following 340-residue polypeptide: UDP-N-acetylglucosamine--N-acetylmuramyl-(pentapeptide) pyrophosphoryl-undecaprenol N-acetylglucosamine transferase (340 aa).

UDP-N-acetyl-alpha-D-glucosamine contacts are provided by residues 10–12, N124, S179, and Q277; that span reads TGG.

It belongs to the glycosyltransferase 28 family. MurG subfamily.

It localises to the cell inner membrane. It carries out the reaction di-trans,octa-cis-undecaprenyl diphospho-N-acetyl-alpha-D-muramoyl-L-alanyl-D-glutamyl-meso-2,6-diaminopimeloyl-D-alanyl-D-alanine + UDP-N-acetyl-alpha-D-glucosamine = di-trans,octa-cis-undecaprenyl diphospho-[N-acetyl-alpha-D-glucosaminyl-(1-&gt;4)]-N-acetyl-alpha-D-muramoyl-L-alanyl-D-glutamyl-meso-2,6-diaminopimeloyl-D-alanyl-D-alanine + UDP + H(+). It functions in the pathway cell wall biogenesis; peptidoglycan biosynthesis. Its function is as follows. Cell wall formation. Catalyzes the transfer of a GlcNAc subunit on undecaprenyl-pyrophosphoryl-MurNAc-pentapeptide (lipid intermediate I) to form undecaprenyl-pyrophosphoryl-MurNAc-(pentapeptide)GlcNAc (lipid intermediate II). This Sulfurimonas denitrificans (strain ATCC 33889 / DSM 1251) (Thiomicrospira denitrificans (strain ATCC 33889 / DSM 1251)) protein is UDP-N-acetylglucosamine--N-acetylmuramyl-(pentapeptide) pyrophosphoryl-undecaprenol N-acetylglucosamine transferase.